The sequence spans 251 residues: Triosephosphate isomerase (251 aa).

9-11 (NWK) contributes to the substrate binding site. The Electrophile role is filled by H95. Catalysis depends on E167, which acts as the Proton acceptor. Residues G173, S212, and 233–234 (GG) each bind substrate.

Belongs to the triosephosphate isomerase family. In terms of assembly, homodimer.

It localises to the cytoplasm. It catalyses the reaction D-glyceraldehyde 3-phosphate = dihydroxyacetone phosphate. Its pathway is carbohydrate biosynthesis; gluconeogenesis. It functions in the pathway carbohydrate degradation; glycolysis; D-glyceraldehyde 3-phosphate from glycerone phosphate: step 1/1. Involved in the gluconeogenesis. Catalyzes stereospecifically the conversion of dihydroxyacetone phosphate (DHAP) to D-glyceraldehyde-3-phosphate (G3P). The chain is Triosephosphate isomerase from Pseudomonas putida (strain W619).